The following is a 296-amino-acid chain: MSNPQFRAGFVAIVGRPNVGKSTLTNALIGTKISIVSRKAQTTRHRIHGVLTREHEQFVFVDTPGFQTRHGGAMNRMMNRVVTQALADVDVVVHVVEAGKWSEGDAKLLPLLPKSRRSILVVSKIDALKNRDELFPFVSKLMALHAYDAVVPVSATKGQQLDQLLDEIAAGLPQGDPMFEEDTLTDRPVRFIAAELVREKIFRLVGDELPYGCTVVIEQWEETERGVRIAACVVVERESHRPILLGAGGMHMKRIATEARQDIAKLLDMPVHLEIYIKVRKGWSDREGALRDLGYE.

Residues 7–174 (RAGFVAIVGR…LDEIAAGLPQ (168 aa)) enclose the Era-type G domain. Residues 15–22 (GRPNVGKS) form a G1 region. 15 to 22 (GRPNVGKS) is a GTP binding site. The segment at 41–45 (QTTRH) is G2. The G3 stretch occupies residues 62–65 (DTPG). GTP is bound by residues 62–66 (DTPGF) and 123–126 (SKID). The segment at 123 to 126 (SKID) is G4. The segment at 153–155 (VSA) is G5. The region spanning 205 to 281 (VGDELPYGCT…HLEIYIKVRK (77 aa)) is the KH type-2 domain.

The protein belongs to the TRAFAC class TrmE-Era-EngA-EngB-Septin-like GTPase superfamily. Era GTPase family. Monomer.

The protein resides in the cytoplasm. It localises to the cell inner membrane. An essential GTPase that binds both GDP and GTP, with rapid nucleotide exchange. Plays a role in 16S rRNA processing and 30S ribosomal subunit biogenesis and possibly also in cell cycle regulation and energy metabolism. The polypeptide is GTPase Era (Bordetella parapertussis (strain 12822 / ATCC BAA-587 / NCTC 13253)).